The sequence spans 161 residues: Lectin-like protein EP153R (161 aa).

The Cytoplasmic portion of the chain corresponds to 1 to 30 (MFSNKKYIGLIDKYCEKKILDDSSTIKICY). A helical transmembrane segment spans residues 31 to 51 (ILIGILIGTNMITLIYNFIFW). Topologically, residues 52-161 (ENYITCNQKD…HVSLLYICSK (110 aa)) are extracellular. Cys66 and Cys77 are disulfide-bonded. The tract at residues 66-160 (CPKDWVGYNN…KHVSLLYICS (95 aa)) is lectin-like. Asn89, Asn98, Asn104, Asn110, Asn116, Asn130, and Asn136 each carry an N-linked (GlcNAc...) asparagine; by host glycan. Cysteines 94 and 159 form a disulfide.

The protein belongs to the asfivirus lectin-like protein family. Homodimer.

The protein localises to the host endoplasmic reticulum membrane. Down-regulates MHC-I expression by impairing the appropriate configuration or presentation into the plasma membrane of the latter. Participates in viral hemadsorption, which may help viral spread. Reduces the transactivating activity of host TP53, thus inhibiting apoptosis. Non-essential for virus growth in swine macrophage cell cultures. This is Lectin-like protein EP153R from African swine fever virus (isolate Tick/Malawi/Lil 20-1/1983) (ASFV).